Reading from the N-terminus, the 94-residue chain is Cell division topological specificity factor (94 aa).

The protein belongs to the MinE family.

Functionally, prevents the cell division inhibition by proteins MinC and MinD at internal division sites while permitting inhibition at polar sites. This ensures cell division at the proper site by restricting the formation of a division septum at the midpoint of the long axis of the cell. The chain is Cell division topological specificity factor from Synechococcus sp. (strain CC9311).